A 313-amino-acid chain; its full sequence is Homoserine O-succinyltransferase (313 aa).

Residue C142 is the Acyl-thioester intermediate of the active site. Residues K163 and S192 each coordinate substrate. The active-site Proton acceptor is the H235. The active site involves E237. R249 contributes to the substrate binding site.

Belongs to the MetA family.

Its subcellular location is the cytoplasm. It carries out the reaction L-homoserine + succinyl-CoA = O-succinyl-L-homoserine + CoA. It functions in the pathway amino-acid biosynthesis; L-methionine biosynthesis via de novo pathway; O-succinyl-L-homoserine from L-homoserine: step 1/1. Transfers a succinyl group from succinyl-CoA to L-homoserine, forming succinyl-L-homoserine. In Aliivibrio fischeri (strain MJ11) (Vibrio fischeri), this protein is Homoserine O-succinyltransferase.